The following is a 201-amino-acid chain: dTTP/UTP pyrophosphatase (201 aa).

The active-site Proton acceptor is D81.

It belongs to the Maf family. YhdE subfamily. A divalent metal cation is required as a cofactor.

It is found in the cytoplasm. The catalysed reaction is dTTP + H2O = dTMP + diphosphate + H(+). The enzyme catalyses UTP + H2O = UMP + diphosphate + H(+). Nucleoside triphosphate pyrophosphatase that hydrolyzes dTTP and UTP. May have a dual role in cell division arrest and in preventing the incorporation of modified nucleotides into cellular nucleic acids. The protein is dTTP/UTP pyrophosphatase of Bordetella avium (strain 197N).